Consider the following 642-residue polypeptide: Sodium-dependent phosphate transport protein 2A (642 aa).

Residues 1-106 are Cytoplasmic-facing; sequence MISYGEQLSS…LRRTAMTLLK (106 aa). A phosphoserine mark is found at serine 14 and serine 37. The helical transmembrane segment at 107-128 threads the bilayer; the sequence is LPLMVTFLYLFVCSLDVLSSAF. Over 129–148 the chain is Extracellular; it reads QLAGGKVAGDIFKDNAILAN. The helical transmembrane segment at 149-166 threads the bilayer; sequence PVAGLVVGILVTVLVQSS. Residues 167 to 168 are Cytoplasmic-facing; it reads ST. Residues 169 to 188 form a helical membrane-spanning segment; the sequence is ATSIIVSMVSSGLLEVSSAI. Over 189-350 the chain is Extracellular; it reads PIIMGSNIGT…HIFVDTQLPD (162 aa). 2 disulfide bridges follow: cysteine 228–cysteine 525 and cysteine 309–cysteine 339. 3 N-linked (GlcNAc...) asparagine glycosylation sites follow: asparagine 301, asparagine 326, and asparagine 333. Residues 351–373 form a helical membrane-spanning segment; it reads LAVGLILLAGSLVLLCTCLILLV. Residues 374–415 lie on the Cytoplasmic side of the membrane; that stretch reads KMLNSLLKGQVAKVIQKVINTDLPAPFTWVTGYFAMVVGAAM. A helical membrane pass occupies residues 416 to 439; it reads TFIVQSSSVFTSAITPLVGLGVIS. Topologically, residues 440–469 are extracellular; it reads IERAYPLTLGSNIGTTTTAILAALASPREK. A helical transmembrane segment spans residues 470-490; sequence LSSSFQIALCHFFFNISGILL. Topologically, residues 491-516 are cytoplasmic; it reads WYPLPCTRLPIRMAKALGKRTAKYRW. Threonine 511 carries the phosphothreonine; by PKC modification. The chain crosses the membrane as a helical span at residues 517-537; that stretch reads FAVLYLLVCFLLLPSLVFGIS. At 538–542 the chain is on the extracellular side; sequence MAGWR. A helical transmembrane segment spans residues 543 to 564; it reads AMVGVGAPFGALLAFVVLINVL. Residues 565–642 lie on the Cytoplasmic side of the membrane; the sequence is QSRSPGRLPK…LPAHHNATRL (78 aa). Serine 610 bears the Phosphoserine mark. A Phosphothreonine modification is found at threonine 626. Residue serine 628 is modified to Phosphoserine.

The protein belongs to the SLC34A transporter family. In terms of assembly, interacts via its C-terminal region with NHERF4. Interacts with NHERF1. Interacts with TMEM174; regulates SLC34A1 internalization by PTH and FGF23. Expressed in the kidney cortex.

Its subcellular location is the apical cell membrane. It localises to the cell membrane. It carries out the reaction 3 Na(+)(out) + phosphate(out) = 3 Na(+)(in) + phosphate(in). Transport activity is significantly increased in response to dietary phosphate deprivation. Involved in actively transporting phosphate into cells via Na(+) cotransport in the renal brush border membrane. The cotransport has a Na(+):Pi stoichiometry of 3:1 and is electrogenic. The sequence is that of Sodium-dependent phosphate transport protein 2A from Oryctolagus cuniculus (Rabbit).